Here is a 238-residue protein sequence, read N- to C-terminus: Ribonuclease PH (238 aa).

The disordered stretch occupies residues 66-88 (LPRSTHTRSDREAARGKQSGRTQ). Phosphate-binding positions include R86 and 124 to 126 (GTR).

This sequence belongs to the RNase PH family. In terms of assembly, homohexameric ring arranged as a trimer of dimers.

It carries out the reaction tRNA(n+1) + phosphate = tRNA(n) + a ribonucleoside 5'-diphosphate. Phosphorolytic 3'-5' exoribonuclease that plays an important role in tRNA 3'-end maturation. Removes nucleotide residues following the 3'-CCA terminus of tRNAs; can also add nucleotides to the ends of RNA molecules by using nucleoside diphosphates as substrates, but this may not be physiologically important. Probably plays a role in initiation of 16S rRNA degradation (leading to ribosome degradation) during starvation. This Ralstonia pickettii (strain 12J) protein is Ribonuclease PH.